The primary structure comprises 172 residues: Oleosin 18 kDa (172 aa).

N-acetylalanine is present on A2. Residues 2–38 are polar; the sequence is ADRDRAGQYYQQQRGQVGETVKGILPEKAPSASQALT. The hydrophobic stretch occupies residues 39-110; it reads VATLFPLGGL…GGLSSLTFLA (72 aa). The next 3 membrane-spanning stretches (helical) occupy residues 42–62, 70–90, and 91–111; these read LFPL…ASVV, VFLI…LAVA, and GFLT…FLAN. A disordered region spans residues 147–172; it reads HAIQGRADQAGTGAGAGGGAGTKTSS. Residues 158–172 show a composition bias toward gly residues; sequence TGAGAGGGAGTKTSS.

The protein belongs to the oleosin family.

The protein localises to the lipid droplet. Its subcellular location is the membrane. Its function is as follows. May have a structural role to stabilize the lipid body during desiccation of the seed by preventing coalescence of the oil. Probably interacts with both lipid and phospholipid moieties of lipid bodies. May also provide recognition signals for specific lipase anchorage in lipolysis during seedling growth. This chain is Oleosin 18 kDa (OLE18), found in Oryza sativa subsp. indica (Rice).